A 268-amino-acid polypeptide reads, in one-letter code: Riboflavin transport system permease protein RibX (268 aa).

Helical transmembrane passes span 24–44, 76–96, 119–139, 140–160, 185–205, and 236–256; these read ALGL…GVTL, LATL…ALIL, AIPV…GLTS, KVLV…VVAI, VEAP…LALA, and LIFV…VLAG. The 181-residue stretch at 75–255 folds into the ABC transmembrane type-1 domain; it reads TLATLSAALG…LITLTLYVLA (181 aa).

It belongs to the binding-protein-dependent transport system permease family. In terms of assembly, the complex is likely composed of an ATP-binding protein, a transmembrane protein (RibX) and a solute-binding protein (RibY).

The protein resides in the cell membrane. Functionally, part of an ABC transporter complex that transports riboflavin into the cell. The protein is Riboflavin transport system permease protein RibX of Chloroflexus aurantiacus (strain ATCC 29366 / DSM 635 / J-10-fl).